The sequence spans 756 residues: LIM domain and actin-binding protein 1 (756 aa).

Residue Met-1 is modified to N-acetylmethionine. Phosphoserine is present on residues Ser-15 and Ser-55. The segment covering 44-56 has biased composition (basic and acidic residues); that stretch reads AAEEANMEKRRSN. 2 disordered regions span residues 44-183 and 204-377; these read AAEE…SNKI and QTKI…AVKK. Over residues 107-118 the composition is skewed to low complexity; it reads EVASSSASGVEA. A Phosphoserine modification is found at Ser-130. The segment covering 140–173 has biased composition (basic and acidic residues); the sequence is RIKDTEHLKDHSAESKKMENCLAESRHEVGKPET. The short motif at 164-166 is the Required for interaction with NPC1L1 element; sequence SRH. Residue Ser-221 is modified to Phosphoserine. A Phosphotyrosine modification is found at Tyr-225. Residues Ser-226 and Ser-238 each carry the phosphoserine modification. The span at 245 to 254 shows a compositional bias: basic and acidic residues; sequence EKSESRRNLE. Ser-259 carries the phosphoserine modification. Over residues 274–287 the composition is skewed to polar residues; the sequence is VSKQSSSTNYTNEL. Residues 294-303 are compositionally biased toward basic and acidic residues; that stretch reads IKTHKLEQKE. 5 positions are modified to phosphoserine: Ser-339, Ser-346, Ser-358, Ser-365, and Ser-370. One can recognise an LIM zinc-binding domain in the interval 384–444; sequence ETCVECQKTV…KPHFNQLFKS (61 aa). N6-succinyllysine is present on Lys-435. Residue Ser-486 is modified to Phosphoserine. The segment at 489 to 509 is required for interaction with MYO5B; that stretch reads VEDAPIAKVGVLTASMEAKAS. The interval 508 to 726 is disordered; sequence ASSQLEKEDK…TTQKQKSQDV (219 aa). Residues 512 to 523 show a composition bias toward basic and acidic residues; sequence LEKEDKPAETKK. Low complexity predominate over residues 533 to 542; sequence ELSSSGSALE. Basic and acidic residues predominate over residues 552–563; that stretch reads WPPEDEVSKPEA. Phosphoserine occurs at positions 597, 600, 605, and 613. The segment covering 627 to 637 has biased composition (basic and acidic residues); that stretch reads AERKQMEKASA. Residues 638–651 show a composition bias toward polar residues; it reads SEKNGSVGKTTWPS. A compositionally biased stretch (basic and acidic residues) spans 652–667; that stretch reads KESRGGEAAGRSKEVQ. Residues 691–721 are compositionally biased toward polar residues; it reads LQQQSPLEPKSKNWSSFADNTSAKEFTTQKQ. Ser-695, Ser-723, and Ser-738 each carry phosphoserine.

As to quaternary structure, interacts with NPC1L1; bridges NPC1L1 with MYO5B. Interacts with MYO5B; bridges MYO5B with NPC1L1. Interacts with PXN; this complex stabilizes actin dynamics. Interacts with F-actin and G-actin. Interacts with LUZP1 (via C-terminus); both proteins restrict ciliation and may work together to regulate this process. Binds RAB40B (GTP-bound); interaction influences LIMA1 subcellular localization in lamellipodia during cell migration. Post-translationally, phosphorylation of the C-terminal region by MAPK1/MAPK3 reduces its association with F-actin and contributes to actin filament reorganization and enhances cell motility. In terms of processing, ubiquitinated by the ECS(RAB40B) complex leading to its degradation. Widely expressed. Highest levels of isoform 2 are expressed in lung, spleen and small intestine. Isoform 2 is expressed at higher levels than isoform 1 in most tissues except liver, fat and kidney. Isoform 1 and isoform 2 are expressed at low levels in skeletal muscle, heart, stomach and lymph.

The protein resides in the cytoplasm. It is found in the cell junction. Its subcellular location is the focal adhesion. It localises to the cytoskeleton. The protein localises to the stress fiber. The protein resides in the cell membrane. It is found in the cell projection. Its subcellular location is the ruffle. It localises to the lamellipodium. Actin-binding protein involved in actin cytoskeleton regulation and dynamics. Increases the number and size of actin stress fibers and inhibits membrane ruffling. Inhibits actin filament depolymerization. Bundles actin filaments, delays filament nucleation and reduces formation of branched filaments. Acts as a negative regulator of primary cilium formation. Plays a role in cholesterol homeostasis. Influences plasma cholesterol levels through regulation of intestinal cholesterol absorption. May act as a scaffold protein by regulating NPC1L1 transportation, an essential protein for cholesterol absorption, to the plasma membrane by recruiting MYO5B to NPC1L1, and thus facilitates cholesterol uptake. The chain is LIM domain and actin-binding protein 1 from Sus scrofa (Pig).